The sequence spans 864 residues: Paramyosin (864 aa).

A nonhelical region region spans residues 1–30 (MSSLYRDLDSDVSSTRIVRHSYNVYRGSSP). Residues 31–853 (SSQNRLESRI…QTVRRSRSMS (823 aa)) are a coiled coil. The nonhelical region stretch occupies residues 854–864 (VSREVTRVVRV).

The protein belongs to the paramyosin family. Homodimer. Phosphorylated. As to expression, most abundantly expressed in muscle tissues from byssus retractor and adductor muscles. Low expression in foot, gill, inner mantle and outer mantle.

The protein localises to the cytoplasm. It localises to the myofibril. Its function is as follows. Paramyosin is a major structural component of many thick filaments isolated from invertebrate muscles. This Mytilus galloprovincialis (Mediterranean mussel) protein is Paramyosin.